The chain runs to 1009 residues: Ulvan lyase, long isoform (1009 aa).

The signal sequence occupies residues 1–32; sequence MTAQKSKYFNRIMTMNTLLFSLLTVGFSQAYA. A substrate-binding site is contributed by 137 to 138; sequence SH. Residue histidine 138 is the Proton donor/acceptor of the active site. Ca(2+) contacts are provided by aspartate 200, aspartate 210, and lysine 212. Tyrosine 291 and arginine 308 together coordinate substrate. Residues aspartate 311, aspartate 314, and tyrosine 316 each coordinate Ca(2+). Tyrosine 372 contacts substrate.

The protein belongs to the polysaccharide lyase 24 family.

In terms of biological role, ulvan lyase involved in ulvan degradation. Ulvan is the main polysaccharide component of the Ulvales (green seaweed) cell wall. It is composed of disaccharide building blocks comprising 3-sulfated rhamnose (Rha3S) linked to D-glucuronic acid (GlcA), L-iduronic acid (IduA), or D-xylose (Xyl). Ulvan lyase catalyzes preferentially the endolytic cleavage of the glycosidic bond between Rha3S and the uronic acid GlcA, but not IduA, producing oligosaccharides that have unsaturated 4-deoxy-L-threo-hex-4-enopyranosiduronic acid (deltaUA) at the non-reducing end. The most abundant end products in the degradation of the ulvan polysaccharide were deltaUA-Rha3S disaccharides and deltaUA-Rha3S-IduA-Rha3S and deltaUA-Rha3S-Xyl-Rha3S tetrasaccharides. In Glaciecola sp. (strain KUL10), this protein is Ulvan lyase, long isoform (ullA).